The sequence spans 94 residues: Protein translocase subunit SecE (94 aa).

The interval 1–32 (MTDAVGSIDMPDAQDEAPDSKKSRKGGKRGKK) is disordered. A compositionally biased stretch (basic residues) spans 22–32 (KSRKGGKRGKK). Residues 65–85 (TVVIIFVVIMIGLVTLIDYGF) traverse the membrane as a helical segment.

The protein belongs to the SecE/SEC61-gamma family. In terms of assembly, component of the Sec protein translocase complex. Heterotrimer consisting of SecY, SecE and SecG subunits. The heterotrimers can form oligomers, although 1 heterotrimer is thought to be able to translocate proteins. Interacts with the ribosome. Interacts with SecDF, and other proteins may be involved. Interacts with SecA.

It localises to the cell membrane. Essential subunit of the Sec protein translocation channel SecYEG. Clamps together the 2 halves of SecY. May contact the channel plug during translocation. In Streptomyces coelicolor (strain ATCC BAA-471 / A3(2) / M145), this protein is Protein translocase subunit SecE.